A 1050-amino-acid chain; its full sequence is Transcription intermediary factor 1-alpha (1050 aa).

K7 is covalently cross-linked (Glycyl lysine isopeptide (Lys-Gly) (interchain with G-Cter in SUMO2)). The segment covering 15 to 30 (ASAAASGGPSAAPSGE) has biased composition (low complexity). A disordered region spans residues 15-44 (ASAAASGGPSAAPSGENEAESRQGPDSERG). A compositionally biased stretch (basic and acidic residues) spans 33-44 (AESRQGPDSERG). An RING-type zinc finger spans residues 56–82 (CAVCHQNIQSRAPKLLPCLHSFCQRCL). The residue at position 101 (T101) is a Phosphothreonine. A Phosphoserine modification is found at S110. B box-type zinc fingers lie at residues 158–211 (KSNQ…VSPE) and 218–259 (QRPV…YQFI). Positions 163, 166, 187, and 200 each coordinate Zn(2+). K205 participates in a covalent cross-link: Glycyl lysine isopeptide (Lys-Gly) (interchain with G-Cter in SUMO2). Zn(2+) contacts are provided by C223, H226, C246, and H251. K276 is covalently cross-linked (Glycyl lysine isopeptide (Lys-Gly) (interchain with G-Cter in SUMO2)). Residues 289 to 359 (NQIQNRIIEV…AGLSKQLEHV (71 aa)) are a coiled coil. Positions 429–456 (ESQPQMPKQNPVVEQNSQPPSGLSSNQL) are disordered. A compositionally biased stretch (polar residues) spans 431–456 (QPQMPKQNPVVEQNSQPPSGLSSNQL). Glycyl lysine isopeptide (Lys-Gly) (interchain with G-Cter in SUMO2) cross-links involve residues K436 and K458. At R469 the chain carries Omega-N-methylarginine. Composition is skewed to low complexity over residues 476-490 (QVMA…RPAP) and 499-510 (QGPIQQPSISHQ). Residues 476–550 (QVMAQRQQVQ…PPNQNIPRQA (75 aa)) form a disordered region. Over residues 526 to 535 (PNGPVLPPHP) the composition is skewed to pro residues. K552 participates in a covalent cross-link: Glycyl lysine isopeptide (Lys-Gly) (interchain with G-Cter in SUMO2). A disordered region spans residues 571–594 (ISSGQGTPSTTNSTSSTPSSPTIT). Residues 577–594 (TPSTTNSTSSTPSSPTIT) are compositionally biased toward low complexity. K641 participates in a covalent cross-link: Glycyl lysine isopeptide (Lys-Gly) (interchain with G-Cter in SUMO2). The segment at 643-712 (TNIDHGQPRP…PAGADSTHKV (70 aa)) is disordered. S654, S660, and S667 each carry phosphoserine. Residues 654-666 (SNRTVQSPNSSVP) are compositionally biased toward polar residues. Positions 685–707 (SPSASSVGSRGSSGSSSKPAGAD) are enriched in low complexity. Glycyl lysine isopeptide (Lys-Gly) (interchain with G-Cter in SUMO2) cross-links involve residues K702 and K711. Residue K723 forms a Glycyl lysine isopeptide (Lys-Gly) (interchain with G-Cter in SUMO1); alternate linkage. Residue K723 forms a Glycyl lysine isopeptide (Lys-Gly) (interchain with G-Cter in SUMO2); alternate linkage. Residue K741 forms a Glycyl lysine isopeptide (Lys-Gly) (interchain with G-Cter in SUMO2) linkage. Residue S744 is modified to Phosphoserine. Residues 754–779 (NYPRSILTSLLLNSSQSSTSEETVLR) form a nuclear receptor binding site (NRBS) region. The segment at 766 to 824 (NSSQSSTSEETVLRSDAPDSTGDQPGLHQDNSSNGKSEWLDPSQKSPLHVGETRKEDDP) is disordered. Phosphoserine; by ATM is present on S768. K801 is covalently cross-linked (Glycyl lysine isopeptide (Lys-Gly) (interchain with G-Cter in SUMO2)). S808 is subject to Phosphoserine. Residue K810 forms a Glycyl lysine isopeptide (Lys-Gly) (interchain with G-Cter in SUMO2) linkage. Position 811 is a phosphoserine (S811). A Phosphothreonine modification is found at T818. The PHD-type zinc-finger motif lies at 826-873 (EDWCAVCQNGGELLCCEKCPKVFHLSCHVPTLTNFPSGEWICTFCRDL). An interaction with histone H3 that is not methylated at 'Lys-4' (H3K4me0) region spans residues 834 to 840 (NGGELLC). Residue K875 forms a Glycyl lysine isopeptide (Lys-Gly) (interchain with G-Cter in SUMO2) linkage. Positions 891 to 907 (KKKTEGLVKLTPIDKRK) match the Nuclear localization signal motif. Residues 899–1004 (KLTPIDKRKC…NYFEELLKNL (106 aa)) form the Bromo domain. K949 is covalently cross-linked (Glycyl lysine isopeptide (Lys-Gly) (interchain with G-Cter in SUMO2)). The segment at 979 to 980 (FN) is interaction with histone H3 that is acetylated at 'Lys-23' (H3K23ac). K992 participates in a covalent cross-link: Glycyl lysine isopeptide (Lys-Gly) (interchain with G-Cter in SUMO2). A compositionally biased stretch (basic and acidic residues) spans 1011 to 1026 (PKPEFRNESEDNKFSD). Positions 1011–1036 (PKPEFRNESEDNKFSDDSDDDFVQPR) are disordered. 3 positions are modified to phosphoserine: S1019, S1025, and S1028. Residue K1041 forms a Glycyl lysine isopeptide (Lys-Gly) (interchain with G-Cter in SUMO2) linkage. S1042 carries the post-translational modification Phosphoserine.

In terms of assembly, interacts with CARM1, NCOA2/GRIP1, PML, KAT5/TIP60, BRD7, CBX1, CBX3 and CBX5. Part of a coactivator complex containing TRIM24, NCOA2 and CARM1. Interacts with NR3C2/MCR. Interacts with the ligand-binding domain of estrogen receptors (in vitro). Interaction with DNA-bound estrogen receptors requires the presence of estradiol. Interacts with AR and p53/TP53. Interacts (via bromo domain) with histone H3 (via N-terminus), provided that it is not methylated at 'Lys-4' (H3K4me0). Does not interact with histone H3 that is methylated at 'Lys-4' (H3K4me1, H3K4me2 or H3K4me3). Interacts (via bromo domain) with histone H3 (via N-terminus) that is acetylated at 'Lys-23' (H3K23ac). Has the highest affinity for histone H3 that is both unmodified at 'Lys-4' (H3K4me0) and acetylated at 'Lys-23' (H3K23ac). Has very low affinity for histone H3 that is methylated at 'Lys-9' (H3K9me), or acetylated at both 'Lys-9' (H3K9ac) and 'Lys-14' (H3K14ac), or acetylated at 'Lys-27' (H3K27ac) (in vitro). Interacts with TRIM16. Phosphorylated at Ser-768 by ATM kinase induces ubiquitination and degradation during DNA damage. In terms of processing, sumoylated. Post-translationally, undergoes ubiquitination-mediated degradation in response to DNA damage.

The protein localises to the nucleus. The protein resides in the cytoplasm. It localises to the mitochondrion. It carries out the reaction S-ubiquitinyl-[E2 ubiquitin-conjugating enzyme]-L-cysteine + [acceptor protein]-L-lysine = [E2 ubiquitin-conjugating enzyme]-L-cysteine + N(6)-ubiquitinyl-[acceptor protein]-L-lysine.. It functions in the pathway protein modification; protein ubiquitination. Transcriptional coactivator that interacts with numerous nuclear receptors and coactivators and modulates the transcription of target genes. Interacts with chromatin depending on histone H3 modifications, having the highest affinity for histone H3 that is both unmodified at 'Lys-4' (H3K4me0) and acetylated at 'Lys-23' (H3K23ac). Has E3 protein-ubiquitin ligase activity. During the DNA damage response, participates in an autoregulatory feedback loop with TP53. Early in response to DNA damage, ATM kinase phosphorylates TRIM24 leading to its ubiquitination and degradation. After sufficient DNA repair has occurred, TP53 activates TRIM24 transcription, ultimately leading to TRIM24-mediated TP53 ubiquitination and degradation. Plays a role in the regulation of cell proliferation and apoptosis, at least in part via its effects on p53/TP53 levels. Up-regulates ligand-dependent transcription activation by AR, GCR/NR3C1, thyroid hormone receptor (TR) and ESR1. Modulates transcription activation by retinoic acid (RA) receptors, including RARA. Plays a role in regulating retinoic acid-dependent proliferation of hepatocytes. Also participates in innate immunity by mediating the specific 'Lys-63'-linked ubiquitination of TRAF3 leading to activation of downstream signal transduction of the type I IFN pathway. Additionally, negatively regulates NLRP3/CASP1/IL-1beta-mediated pyroptosis and cell migration probably by ubiquitinating NLRP3. The chain is Transcription intermediary factor 1-alpha (TRIM24) from Homo sapiens (Human).